The sequence spans 158 residues: uncharacterized protein (158 aa).

In terms of domain architecture, HTH asnC-type spans 12-73 (LDEIDRAILR…LINPFKAGYE (62 aa)). Residues 31-50 (YSEISRRINVPESTVRARVN) constitute a DNA-binding region (H-T-H motif).

This is an uncharacterized protein from Pyrococcus abyssi (strain GE5 / Orsay).